Here is a 1128-residue protein sequence, read N- to C-terminus: Adipocyte enhancer-binding protein 1 (1128 aa).

The N-terminal stretch at 1–25 is a signal peptide; the sequence is MAAVRTASLLCGLLALLALCPEGSP. The segment at 40 to 368 is disordered; sequence GFLSEFETQS…PRKGEELEEE (329 aa). The segment covering 77–109 has biased composition (basic and acidic residues); that stretch reads PRADAEAPPEKNKDKEKKGKKDKGPKAAKHLEG. Residues 113-163 show a composition bias toward basic residues; sequence PTKKPKEKPPKATKKPKEKPPKATKKPKEKPPKATKKPKEKPPKATKRPSA. 2 stretches are compositionally biased toward polar residues: residues 178–187 and 198–209; these read RSLTSPSNPG and TSLNTWQGQGEE. Basic residues predominate over residues 249 to 261; sequence RQKQPRPTPSRKR. Basic and acidic residues-rich tracts occupy residues 267–282 and 327–363; these read PEEKTQEPEERKEVDP and EELKKPKKEGSSPKEDTEDKWAAEKNKDHKAGPRKGE. Residues 375–532 enclose the F5/8 type C domain; it reads IKCPPIGMES…LCMRLEVLGC (158 aa). The interval 382-547 is required for DNA-binding and interaction with NFKBIA; it reads MESHRIEDNQ…YSYYAQNEVV (166 aa). Interaction with MAPK1 and MAPK3 stretches follow at residues 413-616 and 998-1128; these read AGAN…TAGM and DPSR…FGDF. The N-linked (GlcNAc...) asparagine glycan is linked to Asn-520. Positions 547–977 are interaction with PTEN; that stretch reads VTTDSLDFRH…TQCNFILARS (431 aa). Positions 555–896 constitute a Peptidase M14 domain; sequence RHHSYKDMRQ…EALLTFMEQV (342 aa). Positions 933–1128 are required for transcriptional repression; it reads DYWRILNPGE…ETYTVNFGDF (196 aa). Residues 1027-1056 are disordered; the sequence is LRRLNSTTGPATSPTPALTLPPSPTPGSTS. Over residues 1030 to 1044 the composition is skewed to low complexity; it reads LNSTTGPATSPTPAL.

This sequence belongs to the peptidase M14 family. In terms of assembly, interacts with different types of collagen, including collagens I, III, and V. Interacts with GNG5, NFKBIA, MAPK1, MAPK3 and PTEN. May interact with calmodulin. Interaction with MAPK1 may stimulate DNA-binding. Binds to DNA in vitro. Phosphorylated by MAPK1 in vitro. In terms of tissue distribution, expressed in aorta.

It localises to the secreted. Functionally, as a positive regulator of collagen fibrillogenesis, it is probably involved in the organization and remodeling of the extracellular matrix. May positively regulate MAP-kinase activity in adipocytes, leading to enhanced adipocyte proliferation and reduced adipocyte differentiation. May also positively regulate NF-kappa-B activity in macrophages by promoting the phosphorylation and subsequent degradation of I-kappa-B-alpha (NFKBIA), leading to enhanced macrophage inflammatory responsiveness. Can act as a transcriptional repressor. This is Adipocyte enhancer-binding protein 1 (Aebp1) from Rattus norvegicus (Rat).